Reading from the N-terminus, the 601-residue chain is Elongation factor 4 (601 aa).

The tr-type G domain maps to 5–187 (EHIRNFSIIA…AIVERLPAPE (183 aa)). Residues 17–22 (DHGKST) and 134–137 (NKID) each bind GTP.

The protein belongs to the TRAFAC class translation factor GTPase superfamily. Classic translation factor GTPase family. LepA subfamily.

Its subcellular location is the cell inner membrane. The catalysed reaction is GTP + H2O = GDP + phosphate + H(+). Required for accurate and efficient protein synthesis under certain stress conditions. May act as a fidelity factor of the translation reaction, by catalyzing a one-codon backward translocation of tRNAs on improperly translocated ribosomes. Back-translocation proceeds from a post-translocation (POST) complex to a pre-translocation (PRE) complex, thus giving elongation factor G a second chance to translocate the tRNAs correctly. Binds to ribosomes in a GTP-dependent manner. The sequence is that of Elongation factor 4 from Nitratidesulfovibrio vulgaris (strain ATCC 29579 / DSM 644 / CCUG 34227 / NCIMB 8303 / VKM B-1760 / Hildenborough) (Desulfovibrio vulgaris).